The primary structure comprises 243 residues: MPEARDRTERPVDYSTIFANRRRHGILLDEPDSRLSLIESPVNPDIGSIGGTGGLVRGNFTTWRPGNGRGGHTPFRLPQGRENMPIVTARRGRGGGLLPSWYPRTPLRDITHIVRAIERRRGAGTGGDDGRVIEIPTHRQVGVLESPVPLSGEHKCSMVTPGPSVGFKRSCPPSTAKVQKMLLDITKEIAEEEAGFITPEKKLLNSIDKVEKIVMAEIQKLKSTPQAKREEREKRVRTLMTMR.

In terms of assembly, interacts with APC/C activators such as FZR1, FZR2, FZR3, CDC20.1 and CDC20.5. Phosphorylated by CDKA-1 in complex with CYCA1-2. In terms of tissue distribution, expressed in rapidly dividing tissues such as shoot apical meristem and young leaves. Associated with cell division but also with specific cell types.

Negative regulator of the anaphase-promoting complex/cyclosome (APC/C) ubiquitin ligase required for proper mitotic and meiotic progression and cell fate determination. Involved in entry into both meiosis I and meiosis II. Prevents endomitosis by preferentially inhibiting APC/C(CDC20). Required for megagametophyte and endosperm development. Triggers mitotic cyclins (e.g. CYCB1-1 and CYCB1-2) accumulation. Confers immunity to bacterial pathogens (e.g. Pseudomonas syringae pv. tomato DC3000), which is associated with increased expression of disease resistance (R) genes. GIG1 and PANS1 are part of a network linking centromere cohesion and cell cycle progression through control of APC/C activity. This is Protein GIGAS CELL1 (GIG1) from Arabidopsis thaliana (Mouse-ear cress).